We begin with the raw amino-acid sequence, 529 residues long: Nuclear distribution protein PAC1 (529 aa).

The stretch at 68 to 89 (RLQHKIIDLEGEVSNLRTVIDS) forms a coiled coil. WD repeat units follow at residues 120 to 159 (QSHQLVQSVSIHPALPIILGGCSDGSLIIWNLVNDESLIP), 165 to 218 (AHIR…HIRT), 221 to 261 (GHEH…CIKT), 264 to 318 (GHSD…GLSL), 321 to 395 (GHTH…FRPH), 416 to 455 (GHQSWVKSLHIHPNGRFVFSGSDDKTIKIWDLSSLNVNGR), and 496 to 529 (TEEDRRNELMKSIESKIRCLFISGGVDNCIRLWS).

This sequence belongs to the WD repeat LIS1/nudF family. In terms of assembly, self-associates. Interacts with NDL1 and dynein.

It localises to the cytoplasm. The protein localises to the cytoskeleton. The protein resides in the spindle pole. Positively regulates the activity of the minus-end directed microtubule motor protein dynein. Plays a central role in positioning the mitotic spindle at the bud neck during cell division. Targets cytoplasmic dynein to microtubule plus ends, thereby promoting dynein-mediated microtubule sliding along the bud cortex and consequently the movement of the mitotic spindle to the bud neck. In Debaryomyces hansenii (strain ATCC 36239 / CBS 767 / BCRC 21394 / JCM 1990 / NBRC 0083 / IGC 2968) (Yeast), this protein is Nuclear distribution protein PAC1.